We begin with the raw amino-acid sequence, 292 residues long: Ribosomal protein L11 methyltransferase (292 aa).

The S-adenosyl-L-methionine site is built by T136, G159, D181, and N228.

This sequence belongs to the methyltransferase superfamily. PrmA family.

It localises to the cytoplasm. The catalysed reaction is L-lysyl-[protein] + 3 S-adenosyl-L-methionine = N(6),N(6),N(6)-trimethyl-L-lysyl-[protein] + 3 S-adenosyl-L-homocysteine + 3 H(+). Functionally, methylates ribosomal protein L11. In Agrobacterium fabrum (strain C58 / ATCC 33970) (Agrobacterium tumefaciens (strain C58)), this protein is Ribosomal protein L11 methyltransferase.